Consider the following 222-residue polypeptide: Protein Thf1 (222 aa).

The stretch at I169–T208 forms a coiled coil. A disordered region spans residues V197 to A222. Over residues S209–A222 the composition is skewed to low complexity.

This sequence belongs to the THF1 family.

Its function is as follows. May be involved in photosynthetic membrane biogenesis. This chain is Protein Thf1, found in Thermosynechococcus vestitus (strain NIES-2133 / IAM M-273 / BP-1).